Reading from the N-terminus, the 304-residue chain is Acetaldehyde dehydrogenase 4 (304 aa).

Catalysis depends on Cys131, which acts as the Acyl-thioester intermediate. NAD(+) is bound by residues 162–170 and Asn273; that span reads SAGPGTRKN.

The protein belongs to the acetaldehyde dehydrogenase family. Heterotetramer composed of two BphI (aldolase) and two BphJ (dehydrogenase).

The enzyme catalyses acetaldehyde + NAD(+) + CoA = acetyl-CoA + NADH + H(+). The catalysed reaction is propanal + NAD(+) + CoA = propanoyl-CoA + NADH + H(+). It functions in the pathway xenobiotic degradation; polychlorinated biphenyl degradation. Bound pyruvate or other intermediates in the aldol addition reaction catalyzed by BphI allosterically activates BphJ reductive deacylation activity. Its function is as follows. Catalyzes the conversion of acetaldehyde or propanal to acetyl-CoA or propanoyl-CoA, respectively, using NAD(+) and coenzyme A. Displays broad specificity since it can utilize aliphatic aldehydes from two to five carbons in length as substrates; the aldehyde substrates can be directly channeled from the aldolase BphI to the dehydrogenase BphJ. Is the final enzyme in the meta-cleavage pathway for the degradation of polychlorinated biphenyls (PCBs). Is also able to utilize NADP(+) instead of NAD(+). Is not active with succinic semialdehyde or picolinaldehyde as substrates. Can also catalyze the reverse reaction, i.e. the reductive deacylation of acetyl-CoA to acetaldehyde, which is then channeled to the BphI active site. The BphI-BphJ enzyme complex exhibits unique bidirectionality in substrate channeling and allosteric activation. The polypeptide is Acetaldehyde dehydrogenase 4 (bphJ) (Paraburkholderia xenovorans (strain LB400)).